A 103-amino-acid polypeptide reads, in one-letter code: Large ribosomal subunit protein uL24 (103 aa).

The protein belongs to the universal ribosomal protein uL24 family. In terms of assembly, part of the 50S ribosomal subunit.

Its function is as follows. One of two assembly initiator proteins, it binds directly to the 5'-end of the 23S rRNA, where it nucleates assembly of the 50S subunit. Functionally, one of the proteins that surrounds the polypeptide exit tunnel on the outside of the subunit. In Oceanobacillus iheyensis (strain DSM 14371 / CIP 107618 / JCM 11309 / KCTC 3954 / HTE831), this protein is Large ribosomal subunit protein uL24.